The chain runs to 80 residues: Small ribosomal subunit protein bS16 (80 aa).

The protein belongs to the bacterial ribosomal protein bS16 family.

The polypeptide is Small ribosomal subunit protein bS16 (Acholeplasma laidlawii (strain PG-8A)).